A 148-amino-acid polypeptide reads, in one-letter code: Glutamyl-tRNA(Gln) amidotransferase subunit C, mitochondrial (148 aa).

The protein belongs to the GatC family. As to quaternary structure, subunit of the heterotrimeric GatCAB amidotransferase (AdT) complex, composed of A, B and C subunits.

It is found in the mitochondrion. It catalyses the reaction L-glutamyl-tRNA(Gln) + L-glutamine + ATP + H2O = L-glutaminyl-tRNA(Gln) + L-glutamate + ADP + phosphate + H(+). Functionally, allows the formation of correctly charged Gln-tRNA(Gln) through the transamidation of misacylated Glu-tRNA(Gln) in the mitochondria. The reaction takes place in the presence of glutamine and ATP through an activated gamma-phospho-Glu-tRNA(Gln). This Drosophila sechellia (Fruit fly) protein is Glutamyl-tRNA(Gln) amidotransferase subunit C, mitochondrial.